Consider the following 133-residue polypeptide: Small ribosomal subunit protein uS8 (133 aa).

This sequence belongs to the universal ribosomal protein uS8 family. As to quaternary structure, part of the 30S ribosomal subunit. Contacts proteins S5 and S12.

Functionally, one of the primary rRNA binding proteins, it binds directly to 16S rRNA central domain where it helps coordinate assembly of the platform of the 30S subunit. This chain is Small ribosomal subunit protein uS8, found in Lachnoclostridium phytofermentans (strain ATCC 700394 / DSM 18823 / ISDg) (Clostridium phytofermentans).